Reading from the N-terminus, the 377-residue chain is Delta(12) fatty acid desaturase DES8.11 (377 aa).

The next 2 helical transmembrane spans lie at 55–75 (LIVA…IPTP) and 79–99 (LAWP…WVIG). A Histidine box-1 motif is present at residues 100-104 (HECGH). A helical membrane pass occupies residues 112-132 (LIDDIVGFVLHSALLTPYFSW). The Histidine box-2 signature appears at 136 to 140 (HRNHH). A run of 3 helical transmembrane segments spans residues 174-194 (VFTL…TNIS), 220-240 (VLLS…LVAA), and 244-264 (AWVI…FVLI). A Histidine box-3 motif is present at residues 310–314 (HVLHH).

The protein belongs to the fatty acid desaturase type 1 family.

It localises to the membrane. It functions in the pathway lipid metabolism; polyunsaturated fatty acid biosynthesis. In terms of biological role, converts linoleic acid into a conjugated octadecatrienoic acid, probably calendic acid. This Calendula officinalis (Pot marigold) protein is Delta(12) fatty acid desaturase DES8.11.